The sequence spans 81 residues: Putative defensin-like protein 52 (81 aa).

The signal sequence occupies residues 1 to 20 (MTFFLVIILAISSSNYNVLA). 2 disulfide bridges follow: Cys-31/Cys-55 and Cys-41/Cys-64.

Belongs to the DEFL family.

It is found in the secreted. The chain is Putative defensin-like protein 52 from Arabidopsis thaliana (Mouse-ear cress).